The following is a 193-amino-acid chain: ATP synthase subunit b (193 aa).

A helical membrane pass occupies residues Pro24–Trp44.

Belongs to the ATPase B chain family. As to quaternary structure, F-type ATPases have 2 components, F(1) - the catalytic core - and F(0) - the membrane proton channel. F(1) has five subunits: alpha(3), beta(3), gamma(1), delta(1), epsilon(1). F(0) has three main subunits: a(1), b(2) and c(10-14). The alpha and beta chains form an alternating ring which encloses part of the gamma chain. F(1) is attached to F(0) by a central stalk formed by the gamma and epsilon chains, while a peripheral stalk is formed by the delta and b chains.

It localises to the cell membrane. Functionally, f(1)F(0) ATP synthase produces ATP from ADP in the presence of a proton or sodium gradient. F-type ATPases consist of two structural domains, F(1) containing the extramembraneous catalytic core and F(0) containing the membrane proton channel, linked together by a central stalk and a peripheral stalk. During catalysis, ATP synthesis in the catalytic domain of F(1) is coupled via a rotary mechanism of the central stalk subunits to proton translocation. Its function is as follows. Component of the F(0) channel, it forms part of the peripheral stalk, linking F(1) to F(0). This is ATP synthase subunit b from Parafrankia sp. (strain EAN1pec).